The sequence spans 235 residues: Ribosomal RNA-processing protein 17 (235 aa).

Residues 49 to 110 (QRQKKAQEFI…AKNDKTEDLQ (62 aa)) are a coiled coil. Residues 99 to 108 (EDAKNDKTED) are compositionally biased toward basic and acidic residues. Disordered stretches follow at residues 99–138 (EDAKNDKTEDLQVESDESWHGFDSDKDDGDNDNNESSVKP) and 209–235 (RVKKFRYLTKNERRINQRKANDNKRRR). Residues S113, S116, and S122 each carry the phosphoserine modification. Over residues 217 to 235 (TKNERRINQRKANDNKRRR) the composition is skewed to basic and acidic residues.

Belongs to the RRP17 family.

The protein resides in the nucleus. The protein localises to the nucleolus. Functionally, essential protein involved in ribosomal RNA processing. This Saccharomyces cerevisiae (strain ATCC 204508 / S288c) (Baker's yeast) protein is Ribosomal RNA-processing protein 17 (RRP17).